The primary structure comprises 318 residues: Trans-prenyltransferase (318 aa).

The helical transmembrane segment at 1 to 21 (MLHLIYISIIVVLIIILISYT) threads the bilayer. Isopentenyl diphosphate is bound by residues Lys85, Arg88, and His122. Residues Asp129 and Asp135 each coordinate Mg(2+). Position 140 (Arg140) interacts with dimethylallyl diphosphate. Position 141 (Arg141) interacts with isopentenyl diphosphate. 3 residues coordinate dimethylallyl diphosphate: Lys216, Thr217, and Gln254.

The protein belongs to the FPP/GGPP synthase family. Asfivirus trans-prenyltransferase subfamily. Requires Mg(2+) as cofactor.

The protein localises to the host endoplasmic reticulum. Its subcellular location is the host membrane. The enzyme catalyses isopentenyl diphosphate + dimethylallyl diphosphate = (2E)-geranyl diphosphate + diphosphate. The catalysed reaction is isopentenyl diphosphate + (2E)-geranyl diphosphate = (2E,6E)-farnesyl diphosphate + diphosphate. It catalyses the reaction isopentenyl diphosphate + (2E,6E)-farnesyl diphosphate = (2E,6E,10E)-geranylgeranyl diphosphate + diphosphate. It carries out the reaction isopentenyl diphosphate + (2E,6E,10E)-geranylgeranyl diphosphate = (2E,6E,10E,14E)-geranylfarnesyl diphosphate + diphosphate. Its pathway is isoprenoid biosynthesis; farnesyl diphosphate biosynthesis; farnesyl diphosphate from geranyl diphosphate and isopentenyl diphosphate: step 1/1. It participates in isoprenoid biosynthesis; geranyl diphosphate biosynthesis; geranyl diphosphate from dimethylallyl diphosphate and isopentenyl diphosphate: step 1/1. It functions in the pathway isoprenoid biosynthesis; geranylgeranyl diphosphate biosynthesis; geranylgeranyl diphosphate from farnesyl diphosphate and isopentenyl diphosphate: step 1/1. Its function is as follows. Trans-prenyltransferase that catalyzes the sequential condensation of isopentenyl diphosphate (IPP) with different allylic diphosphates, such as dimethylallyl diphosphate (DMAPP), geranyl diphosphate (GPP), farnesyl diphosphate (FPP) and geranylgeranyl diphosphate (GGPP), farnesyl diphosphate being the best allylic substrate. In African swine fever virus (isolate Tick/Malawi/Lil 20-1/1983) (ASFV), this protein is Trans-prenyltransferase.